A 473-amino-acid chain; its full sequence is H(+)/Cl(-) exchange transporter ClcA (473 aa).

Residues 1–32 are Cytoplasmic-facing; the sequence is MNTDTPTFEAQQVVRLRRGDLIRRLLQRDKTP. The chain crosses the membrane as a helical span at residues 33 to 69; it reads LAILLTAAVVGTVTGLIGVAFEKAVTWVQNLRIGALV. Residues 70-76 are Periplasmic-facing; the sequence is QTADYAI. Residues 77-100 form a helical membrane-spanning segment; the sequence is LVWPLAFILSALLAMVGYFLVRKF. At 101–108 the chain is on the cytoplasmic side; that stretch reads APEAGGSG. Residues 106 to 110 carry the Selectivity filter part_1 motif; sequence GSGIP. Serine 107 serves as a coordination point for chloride. The helical intramembrane region spans 109–116; that stretch reads IPEIEGAL. The Cytoplasmic segment spans residues 117-123; sequence EELRPVR. The chain crosses the membrane as a helical span at residues 124–141; the sequence is WWRVLPVKFVGGMGTLGA. The Periplasmic segment spans residues 142-147; the sequence is GMVLGR. The Selectivity filter part_2 motif lies at 146–150; that stretch reads GREGP. The helical transmembrane segment at 148–166 threads the bilayer; the sequence is EGPTVQIGGNIGRMVLDLF. The Cytoplasmic segment spans residues 167–176; it reads RMRSAEARHT. 2 intramembrane regions (helical) span residues 177 to 189 and 193 to 201; these read LLATGAAAGLSAA and PLAGILFII. The Cytoplasmic segment spans residues 202-214; that stretch reads EEMRPQFRYNLIS. Residues 215–232 traverse the membrane as a helical segment; sequence IKAVFTGVIMSSIVFRIF. The Periplasmic segment spans residues 233–252; the sequence is NGEAPIIEVGKLSNAPVNTL. Residues 253-281 form a helical membrane-spanning segment; it reads WLYLILGMIFGCVGPLFNHLVLRTQDMFQ. Residues 282-287 lie on the Cytoplasmic side of the membrane; it reads RFHGGE. A helical transmembrane segment spans residues 288 to 309; sequence IKKWVLMGGAIGGLCGILGLIE. Over 310–329 the chain is Periplasmic; the sequence is PEAAGGGFNLIPIAAAGNYS. The helical transmembrane segment at 330-349 threads the bilayer; sequence VGLLLFIFIARVLTTLLCFS. Over 350–354 the chain is Cytoplasmic; the sequence is SGAPG. The Selectivity filter part_3 motif lies at 355-359; that stretch reads GIFAP. Residues 355–376 form a helical membrane-spanning segment; sequence GIFAPMLALGTLLGTAFGMAAA. 2 residues coordinate chloride: isoleucine 356 and phenylalanine 357. Topologically, residues 377 to 386 are periplasmic; the sequence is ACFPQYHLEA. The segment at residues 387–401 is an intramembrane region (helical); it reads GTFAIAGMGALLAAS. The note=Loop between two helices intramembrane region spans 402 to 404; sequence VRA. Residues 405–416 constitute an intramembrane region (helical); that stretch reads PLTGIVLVLEMT. The segment at residues 417 to 421 is an intramembrane region (note=Loop between two helices); that stretch reads DNYQL. A helical transmembrane segment spans residues 422–438; it reads ILPMIITCLGATLLAQF. Residues 439–473 are Cytoplasmic-facing; the sequence is MGGKPLYSTILARTLAKQDAEQAAKSQRSVAGENT. Chloride is bound at residue tyrosine 445.

The protein belongs to the chloride channel (TC 2.A.49) family. ClcA subfamily. As to quaternary structure, homodimer.

Its subcellular location is the cell inner membrane. It carries out the reaction 2 chloride(in) + H(+)(out) = 2 chloride(out) + H(+)(in). In terms of biological role, proton-coupled chloride transporter. Functions as antiport system and exchanges two chloride ions for 1 proton. Probably acts as an electrical shunt for an outwardly-directed proton pump that is linked to amino acid decarboxylation, as part of the extreme acid resistance (XAR) response. In Citrobacter koseri (strain ATCC BAA-895 / CDC 4225-83 / SGSC4696), this protein is H(+)/Cl(-) exchange transporter ClcA.